The sequence spans 374 residues: Heme A synthase (374 aa).

Residues 1-22 are disordered; the sequence is MSDHIRAASSPSRHGSEHGWQH. 5 helical membrane-spanning segments follow: residues 32–52, 118–138, 149–169, 184–204, and 226–246; these read ILVA…VMLG, RLWG…LAVT, LILI…MVAS, VVHL…ALSV, and LGLV…HAGL. H281 provides a ligand contact to heme. The next 3 membrane-spanning stretches (helical) occupy residues 283 to 300, 309 to 329, and 332 to 352; these read LLAT…LIGF, AVLP…ATLL, and VAVP…TAAI. H340 is a heme binding site.

The protein belongs to the COX15/CtaA family. Type 2 subfamily. As to quaternary structure, interacts with CtaB. Heme b serves as cofactor.

It localises to the cell membrane. The catalysed reaction is Fe(II)-heme o + 2 A + H2O = Fe(II)-heme a + 2 AH2. The protein operates within porphyrin-containing compound metabolism; heme A biosynthesis; heme A from heme O: step 1/1. Its function is as follows. Catalyzes the conversion of heme O to heme A by two successive hydroxylations of the methyl group at C8. The first hydroxylation forms heme I, the second hydroxylation results in an unstable dihydroxymethyl group, which spontaneously dehydrates, resulting in the formyl group of heme A. The protein is Heme A synthase of Granulibacter bethesdensis (strain ATCC BAA-1260 / CGDNIH1).